The primary structure comprises 283 residues: Thymidylate synthase (283 aa).

R22 is a binding site for dUMP. Catalysis depends on C160, which acts as the Nucleophile. DUMP-binding positions include 180 to 183 (RSCD), N191, and 221 to 223 (HIY). D183 contributes to the (6R)-5,10-methylene-5,6,7,8-tetrahydrofolate binding site. S282 lines the (6R)-5,10-methylene-5,6,7,8-tetrahydrofolate pocket.

The protein belongs to the thymidylate synthase family. Bacterial-type ThyA subfamily. In terms of assembly, homodimer.

The protein resides in the cytoplasm. It catalyses the reaction dUMP + (6R)-5,10-methylene-5,6,7,8-tetrahydrofolate = 7,8-dihydrofolate + dTMP. It participates in pyrimidine metabolism; dTTP biosynthesis. Catalyzes the reductive methylation of 2'-deoxyuridine-5'-monophosphate (dUMP) to 2'-deoxythymidine-5'-monophosphate (dTMP) while utilizing 5,10-methylenetetrahydrofolate (mTHF) as the methyl donor and reductant in the reaction, yielding dihydrofolate (DHF) as a by-product. This enzymatic reaction provides an intracellular de novo source of dTMP, an essential precursor for DNA biosynthesis. This chain is Thymidylate synthase, found in Photobacterium profundum (strain SS9).